We begin with the raw amino-acid sequence, 391 residues long: Alanine racemase (391 aa).

The active-site Proton acceptor; specific for D-alanine is the Lys46. At Lys46 the chain carries N6-(pyridoxal phosphate)lysine. Arg148 contacts substrate. Tyr283 serves as the catalytic Proton acceptor; specific for L-alanine. Residue Met331 coordinates substrate.

The protein belongs to the alanine racemase family. The cofactor is pyridoxal 5'-phosphate.

It catalyses the reaction L-alanine = D-alanine. It participates in amino-acid biosynthesis; D-alanine biosynthesis; D-alanine from L-alanine: step 1/1. Its function is as follows. Catalyzes the interconversion of L-alanine and D-alanine. May also act on other amino acids. The chain is Alanine racemase (alr) from Streptomyces coelicolor (strain ATCC BAA-471 / A3(2) / M145).